A 25-amino-acid polypeptide reads, in one-letter code: Caerin-1.18 (25 aa).

Leucine 25 bears the Leucine amide mark.

As to expression, expressed by the skin dorsal glands.

It is found in the secreted. Its function is as follows. Shows significant activity against Gram-positive organisms, but is less effective against Gram-negative organisms. This chain is Caerin-1.18, found in Ranoidea gracilenta (Dainty green tree frog).